The sequence spans 411 residues: LL-diaminopimelate aminotransferase (411 aa).

Residues Tyr15 and Gly42 each contribute to the substrate site. Pyridoxal 5'-phosphate is bound by residues Tyr72, 108–109 (AK), Tyr132, Asn187, Tyr218, and 246–248 (SFS). Lys109, Tyr132, and Asn187 together coordinate substrate. Lys249 bears the N6-(pyridoxal phosphate)lysine mark. Residues Arg257 and Asn292 each coordinate pyridoxal 5'-phosphate. Substrate contacts are provided by Asn292 and Arg388.

Belongs to the class-I pyridoxal-phosphate-dependent aminotransferase family. LL-diaminopimelate aminotransferase subfamily. As to quaternary structure, homodimer. Pyridoxal 5'-phosphate serves as cofactor.

The enzyme catalyses (2S,6S)-2,6-diaminopimelate + 2-oxoglutarate = (S)-2,3,4,5-tetrahydrodipicolinate + L-glutamate + H2O + H(+). It functions in the pathway amino-acid biosynthesis; L-lysine biosynthesis via DAP pathway; LL-2,6-diaminopimelate from (S)-tetrahydrodipicolinate (aminotransferase route): step 1/1. Its function is as follows. Involved in the synthesis of meso-diaminopimelate (m-DAP or DL-DAP), required for both lysine and peptidoglycan biosynthesis. Catalyzes the direct conversion of tetrahydrodipicolinate to LL-diaminopimelate. This chain is LL-diaminopimelate aminotransferase, found in Rippkaea orientalis (strain PCC 8801 / RF-1) (Cyanothece sp. (strain PCC 8801)).